A 146-amino-acid polypeptide reads, in one-letter code: Myoglobin (146 aa).

The Globin domain maps to glycine 2–lysine 141. Nitrite is bound at residue histidine 60. Histidine 60 is an O2 binding site. Histidine 89 is a binding site for heme b.

It belongs to the globin family. As to quaternary structure, monomeric.

The protein localises to the cytoplasm. It localises to the sarcoplasm. The enzyme catalyses Fe(III)-heme b-[protein] + nitric oxide + H2O = Fe(II)-heme b-[protein] + nitrite + 2 H(+). It catalyses the reaction H2O2 + AH2 = A + 2 H2O. In terms of biological role, monomeric heme protein which primary function is to store oxygen and facilitate its diffusion within muscle tissues. Reversibly binds oxygen through a pentacoordinated heme iron and enables its timely and efficient release as needed during periods of heightened demand. Depending on the oxidative conditions of tissues and cells, and in addition to its ability to bind oxygen, it also has a nitrite reductase activity whereby it regulates the production of bioactive nitric oxide. Under stress conditions, like hypoxia and anoxia, it also protects cells against reactive oxygen species thanks to its pseudoperoxidase activity. This Tetraodon nigroviridis (Spotted green pufferfish) protein is Myoglobin (mb).